The chain runs to 113 residues: TYRO protein tyrosine kinase-binding protein (113 aa).

The N-terminal stretch at 1–27 (MGGLEPCSRLLLLPLLLAVGGLRPVQA) is a signal peptide. Residues 28–40 (QAQSDCSCSTVSP) are Extracellular-facing. The chain crosses the membrane as a helical span at residues 41 to 61 (GVLAGIVMGDLVLTVLIALAV). Aspartate 50 is a Ca(2+) binding site. Topologically, residues 62-113 (YFLGRLVHRGRGAAEAATRKQRITETESPYQELQGQRSDVYSDLNMQRPYYK) are cytoplasmic. The disordered stretch occupies residues 75–113 (AEAATRKQRITETESPYQELQGQRSDVYSDLNMQRPYYK). Residues 80–108 (RKQRITETESPYQELQGQRSDVYSDLNMQ) form the ITAM domain. A compositionally biased stretch (polar residues) spans 87 to 100 (TESPYQELQGQRSD). Phosphotyrosine is present on residues tyrosine 91 and tyrosine 102.

Belongs to the TYROBP family. As to quaternary structure, homodimer; disulfide-linked. Homotrimer; disulfide-linked. Homotetramer; disulfide-linked. Homotrimers and homotetramers form when low levels of partner receptors are available and is competitive with assembly with interacting receptors. They may represent alternative oligomerization states or may be intermediates in the receptor assembly process. Binding of a metal cation aids in homooligomerization through coordination of the metal ion by the subunits of the oligomer. Interacts with TREM1. Interacts with TREM2. Interacts with CLECSF5. Interacts with CD300LB and CD300C2. Interacts with CD300E. Interacts (via ITAM domain) with SYK (via SH2 domains); activates SYK mediating neutrophils and macrophages integrin-mediated activation. Interacts with KLRC2. Interacts with CD300H. Interacts with KLRD1. Interacts with SIGLEC1. Post-translationally, following ligand binding by associated receptors, tyrosine phosphorylated in the ITAM domain which leads to activation of additional tyrosine kinases and subsequent cell activation.

Its subcellular location is the cell membrane. Functionally, adapter protein which non-covalently associates with activating receptors found on the surface of a variety of immune cells to mediate signaling and cell activation following ligand binding by the receptors. TYROBP is tyrosine-phosphorylated in the ITAM domain following ligand binding by the associated receptors which leads to activation of additional tyrosine kinases and subsequent cell activation. Also has an inhibitory role in some cells. Non-covalently associates with activating receptors of the CD300 family to mediate cell activation. Also mediates cell activation through association with activating receptors of the CD200R family. Required for neutrophil activation mediated by integrin. Required for the activation of myeloid cells mediated by the CLEC5A/MDL1 receptor. Associates with natural killer (NK) cell receptors such as the KLRD1/KLRC2 heterodimer to mediate NK cell activation. Associates with TREM1 to mediate activation of neutrophils and monocytes. Associates with TREM2 on monocyte-derived dendritic cells to mediate up-regulation of chemokine receptor CCR7 and dendritic cell maturation and survival. Association with TREM2 mediates cytokine-induced formation of multinucleated giant cells which are formed by the fusion of macrophages. Stabilizes the TREM2 C-terminal fragment (TREM2-CTF) produced by TREM2 ectodomain shedding which suppresses the release of pro-inflammatory cytokines. In microglia, required with TREM2 for phagocytosis of apoptotic neurons. Required with ITGAM/CD11B in microglia to control production of microglial superoxide ions which promote the neuronal apoptosis that occurs during brain development. Promotes pro-inflammatory responses in microglia following nerve injury which accelerates degeneration of injured neurons. Positively regulates the expression of the IRAK3/IRAK-M kinase and IL10 production by liver dendritic cells and inhibits their T cell allosimulatory ability. Negatively regulates B cell proliferation. Required for CSF1-mediated osteoclast cytoskeletal organization. Positively regulates multinucleation during osteoclast development. This chain is TYRO protein tyrosine kinase-binding protein, found in Pan troglodytes (Chimpanzee).